Here is a 355-residue protein sequence, read N- to C-terminus: Uroporphyrinogen decarboxylase (355 aa).

Substrate is bound by residues 27-31 (RQAGR), Asp78, Tyr155, Thr210, and His328.

This sequence belongs to the uroporphyrinogen decarboxylase family. In terms of assembly, homodimer.

The protein resides in the cytoplasm. The enzyme catalyses uroporphyrinogen III + 4 H(+) = coproporphyrinogen III + 4 CO2. It participates in porphyrin-containing compound metabolism; protoporphyrin-IX biosynthesis; coproporphyrinogen-III from 5-aminolevulinate: step 4/4. Functionally, catalyzes the decarboxylation of four acetate groups of uroporphyrinogen-III to yield coproporphyrinogen-III. The chain is Uroporphyrinogen decarboxylase from Pseudomonas fluorescens (strain SBW25).